A 187-amino-acid chain; its full sequence is Pseudo histidine-containing phosphotransfer protein 1 (187 aa).

The HPt domain occupies 74–169 (SPNFVEEVVT…AVLRQKLESY (96 aa)).

Its function is as follows. Functions as a two-component phosphorelay mediator between cytokinin sensor histidine kinases and response regulators (B-type ARRs). Plays an important role in propagating cytokinin signal transduction. In Oryza sativa subsp. japonica (Rice), this protein is Pseudo histidine-containing phosphotransfer protein 1.